The sequence spans 705 residues: Zinc finger protein 770 (705 aa).

Residue K16 forms a Glycyl lysine isopeptide (Lys-Gly) (interchain with G-Cter in SUMO2) linkage. 3 consecutive C2H2-type zinc fingers follow at residues Y31–H53, F59–H81, and F85–H107. Residues K116, K124, and K149 each participate in a glycyl lysine isopeptide (Lys-Gly) (interchain with G-Cter in SUMO2) cross-link. 3 C2H2-type zinc fingers span residues H164–H186, F192–H214, and F220–H242. Residue K266 forms a Glycyl lysine isopeptide (Lys-Gly) (interchain with G-Cter in SUMO2) linkage. The C2H2-type 7; degenerate zinc finger occupies F298–R322. C2H2-type zinc fingers lie at residues C485–H507, F513–H535, Y640–H662, and F668–H690. K698 participates in a covalent cross-link: Glycyl lysine isopeptide (Lys-Gly) (interchain with G-Cter in SUMO2).

It belongs to the krueppel C2H2-type zinc-finger protein family.

The protein localises to the nucleus. Functionally, may be involved in transcriptional regulation. The chain is Zinc finger protein 770 (Znf770) from Mus musculus (Mouse).